The following is a 66-amino-acid chain: Cell division protein ZapB (66 aa).

Residues 3 to 59 adopt a coiled-coil conformation; the sequence is LELLSQLETKIQATLENIELLKMELEEEKQKSTQLAEKNQKLQQDLNSWSDKVNGLV.

It belongs to the ZapB family. Homodimer. The ends of the coiled-coil dimer bind to each other, forming polymers. Interacts with FtsZ.

It localises to the cytoplasm. Non-essential, abundant cell division factor that is required for proper Z-ring formation. It is recruited early to the divisome by direct interaction with FtsZ, stimulating Z-ring assembly and thereby promoting cell division earlier in the cell cycle. Its recruitment to the Z-ring requires functional FtsA or ZipA. In Shewanella denitrificans (strain OS217 / ATCC BAA-1090 / DSM 15013), this protein is Cell division protein ZapB.